An 872-amino-acid chain; its full sequence is Homeobox-leucine zipper protein ROC6 (872 aa).

2 disordered regions span residues 28-53 and 67-130; these read VHNS…GLSL and NRSL…HRHT. Residues 74-85 are compositionally biased toward gly residues; the sequence is GNGGSGSGGDGD. A compositionally biased stretch (basic and acidic residues) spans 86–99; that stretch reads SLGRGREEENDSRS. The span at 119–130 shows a compositional bias: basic residues; it reads PRKKKKRYHRHT. Residues 122–181 constitute a DNA-binding region (homeobox); it reads KKKRYHRHTPQQIQELEAVFKECPHPDEKQRMELSRRLNLESRQVKFWFQNRRTQMKQTQ. A coiled-coil region spans residues 176 to 248; it reads QMKQTQIERH…LKDELDRVCA (73 aa). An START domain is found at 340–583; it reads GAIDRAVLLE…LQRQCQYLAI (244 aa). The tract at residues 792–818 is disordered; sequence HNNGASPSPAEVGSGASPNSAAGGGGG.

The protein belongs to the HD-ZIP homeobox family. Class IV subfamily.

It localises to the nucleus. Functionally, probable transcription factor. In Oryza sativa subsp. japonica (Rice), this protein is Homeobox-leucine zipper protein ROC6 (ROC6).